We begin with the raw amino-acid sequence, 343 residues long: Arginine-hydroxylase NDUFAF5, mitochondrial (343 aa).

A mitochondrion-targeting transit peptide spans M1–V29. Residues A18 to S40 are disordered.

It belongs to the methyltransferase superfamily. In terms of assembly, interacts with NDUFAF8, leading to stabilize NDUFAF5. Interacts with NDUFS7. Interacts with PYURF (via TRM112 domain); the interaction is direct and stabilizes NDUFAF5 protein.

It localises to the mitochondrion inner membrane. Its function is as follows. Arginine hydroxylase that mediates hydroxylation of 'Arg-111' of NDUFS7 and is involved in the assembly of mitochondrial NADH:ubiquinone oxidoreductase complex (complex I, MT-ND1) at early stages. May also have methyltransferase activity. This is Arginine-hydroxylase NDUFAF5, mitochondrial from Rattus norvegicus (Rat).